The primary structure comprises 436 residues: Kynureninase (436 aa).

Pyridoxal 5'-phosphate contacts are provided by residues L88, T89, 116–119 (FPSD), D202, H205, and Y227. Position 228 is an N6-(pyridoxal phosphate)lysine (K228). W280 and N308 together coordinate pyridoxal 5'-phosphate.

Belongs to the kynureninase family. As to quaternary structure, homodimer. Pyridoxal 5'-phosphate serves as cofactor.

The protein resides in the cytoplasm. The catalysed reaction is L-kynurenine + H2O = anthranilate + L-alanine + H(+). The enzyme catalyses 3-hydroxy-L-kynurenine + H2O = 3-hydroxyanthranilate + L-alanine + H(+). It participates in amino-acid degradation; L-kynurenine degradation; L-alanine and anthranilate from L-kynurenine: step 1/1. It functions in the pathway cofactor biosynthesis; NAD(+) biosynthesis; quinolinate from L-kynurenine: step 2/3. Catalyzes the cleavage of L-kynurenine (L-Kyn) and L-3-hydroxykynurenine (L-3OHKyn) into anthranilic acid (AA) and 3-hydroxyanthranilic acid (3-OHAA), respectively. The chain is Kynureninase from Schistosoma japonicum (Blood fluke).